Consider the following 275-residue polypeptide: Lycopene elongase/hydratase (275 aa).

Transmembrane regions (helical) follow at residues 13 to 33 (FWLYLAGPVLVGVSYGATTVG), 38 to 58 (APAVVLFSYFLLPANIYLYGI), 84 to 104 (AAVAVIVAVCGVFLGFVAAPL), 107 to 127 (EAWPYLAAWFVLATEYSAPPL), 134 to 154 (VLDSLSNGLYVLPAAAAYAGV), 160 to 180 (PLLAVAGGWLWAMGMHTFSAI), 203 to 223 (ALAYCAGIWLLSAAVFALVDV), 225 to 245 (FGLLLLAYPVLVFGIRRLQVA), and 253 to 273 (YPAVNTLVGMVFTLGGLWGVV).

The protein belongs to the UbiA prenyltransferase family.

The protein localises to the cell membrane. It catalyses the reaction all-trans-lycopene + dimethylallyl diphosphate + H2O = dihydroisopentenyldehydrorhodopin + diphosphate. The enzyme catalyses isopentenyldehydrorhodopin + dimethylallyl diphosphate + H2O = dihydrobisanhydrobacterioruberin + diphosphate. The protein operates within carotenoid biosynthesis. Inhibited by bacterioopsin. Involved in the biosynthesis of the acyclic C50 carotenoid bacterioruberin (BR). Acts as a bifunctional elongase/hydratase that catalyzes the elongation of lycopene by attaching a C(5) isoprene unit at C-2, as well as the hydroxylation of the previous end of the molecule. The enzyme acts at both ends of the substrate, and catalyzes the conversion of lycopene to the C(45) intermediate dihydroisopentenyldehydrorhodopin (DH-IDR) and the conversion of isopentenyldehydrorhodopin (IDR) to the C(50) carotenoid dihydrobisanhydrobacterioruberin (DH-BABR). Can also catalyze the conversion of lycopene to tetrahydrobisanhydrobacterioruberin (TH-BABR). The polypeptide is Lycopene elongase/hydratase (Halobacterium salinarum (strain ATCC 700922 / JCM 11081 / NRC-1) (Halobacterium halobium)).